We begin with the raw amino-acid sequence, 173 residues long: Ribosome maturation factor RimM (173 aa).

The 74-residue stretch at 92–165 (EGEFYHADLI…RVVIEMPGEI (74 aa)) folds into the PRC barrel domain.

It belongs to the RimM family. As to quaternary structure, binds ribosomal protein uS19.

Its subcellular location is the cytoplasm. Functionally, an accessory protein needed during the final step in the assembly of 30S ribosomal subunit, possibly for assembly of the head region. Essential for efficient processing of 16S rRNA. May be needed both before and after RbfA during the maturation of 16S rRNA. It has affinity for free ribosomal 30S subunits but not for 70S ribosomes. The chain is Ribosome maturation factor RimM from Nitrobacter hamburgensis (strain DSM 10229 / NCIMB 13809 / X14).